Here is a 399-residue protein sequence, read N- to C-terminus: Enolase (399 aa).

Gln-152 is a binding site for (2R)-2-phosphoglycerate. Glu-194 functions as the Proton donor in the catalytic mechanism. Positions 230, 273, and 301 each coordinate Mg(2+). Residues Lys-326, Arg-355, Ser-356, and Lys-377 each coordinate (2R)-2-phosphoglycerate. Lys-326 acts as the Proton acceptor in catalysis.

The protein belongs to the enolase family. Requires Mg(2+) as cofactor.

Its subcellular location is the cytoplasm. The protein resides in the secreted. The protein localises to the cell surface. It catalyses the reaction (2R)-2-phosphoglycerate = phosphoenolpyruvate + H2O. The protein operates within carbohydrate degradation; glycolysis; pyruvate from D-glyceraldehyde 3-phosphate: step 4/5. Catalyzes the reversible conversion of 2-phosphoglycerate (2-PG) into phosphoenolpyruvate (PEP). It is essential for the degradation of carbohydrates via glycolysis. The chain is Enolase from Methanocorpusculum labreanum (strain ATCC 43576 / DSM 4855 / Z).